The sequence spans 75 residues: Cytoplasmic envelopment protein 3 (75 aa).

A lipid anchor (N-myristoyl glycine; by host) is attached at Gly-2. A compositionally biased stretch (acidic residues) spans 53-65 (EGLEYDEDSENDE). Residues 53–75 (EGLEYDEDSENDELLFLPNKKPN) form a disordered region.

The protein belongs to the herpesviridae cytoplasmic envelopment protein 3 family. As to quaternary structure, interacts with BGLF2; this interaction is essential for the proper localization of each protein to the assembly complex and thus for the production of infectious virus. Myristoylation and palmitoylation (probably on one or more of the nearby cysteines at the N-terminus) enable membrane-binding and Golgi apparatus-specific targeting and are essential for efficient packaging. In terms of processing, phosphorylated. Phosphorylation does not seem to be required for recycling to the host Golgi apparatus. Packaging is selective for underphosphorylated forms.

The protein localises to the virion tegument. It localises to the virion membrane. Its subcellular location is the host cell membrane. The protein resides in the host Golgi apparatus membrane. Its function is as follows. Plays an important role in the cytoplasmic envelopment of tegument proteins and capsids during the assembly and egress processes. Also participates in viral entry at the fusion step probably by regulating the core fusion machinery. This is Cytoplasmic envelopment protein 3 from Homo sapiens (Human).